Consider the following 457-residue polypeptide: MPSSATSTYLLSLKQVSLTASSPLLLQLKDRFFHQPKLLNMGFSTGKRKSRDEEEDRVSFFASEFPMDDLNDDVLERVLSWLPTSCFFRMSSVCKRWKSSQTSKSFKLACSQIPTRDPWFFMIDNDSNSSSFVFDSTENSWKNLNRRDFLHHHRQDFIPVASSGGLLCYRCSISGDFLLRNPLTGSSRDIPSQDNNNNKPLQAVAMTTTTVTPSSYTLVTISGEIPNLSFKIYESNADSWSKDQELESVKNNDSSLHDDYDTDSGTVYFLSKQGNVVVASNNLQRSPSKQYSSVITVTDEAEIVYFLSSYGTIVACDLTKRCFTELPKLLPPFLEYSIDLVECEGTMYVILLSEFFESASLRIWRLDNNREWVQVGMLPPALSHELYGKKGDINCVGGAGNKILVCFNASPPEVYCRYFVYDLVAEEWNELPKCFKDGEAVDFVSALSFQPRIEATV.

The F-box domain occupies 64-110; sequence EFPMDDLNDDVLERVLSWLPTSCFFRMSSVCKRWKSSQTSKSFKLAC.

This is F-box only protein 13 (FBX13) from Arabidopsis thaliana (Mouse-ear cress).